A 388-amino-acid polypeptide reads, in one-letter code: Leucine aminopeptidase 1 (388 aa).

The first 19 residues, 1 to 19 (MKSLSLLALAAIAPPAAVA), serve as a signal peptide directing secretion. Positions 20-88 (AVVDHQVPFE…SVKSHERIQV (69 aa)) are excised as a propeptide. An N-linked (GlcNAc...) asparagine glycan is attached at Asn180. His188, Asp207, Glu246, and Asp273 together coordinate Zn(2+). The cysteines at positions 322 and 326 are disulfide-linked. A Zn(2+)-binding site is contributed by His355.

The protein belongs to the peptidase M28 family. M28E subfamily. Monomer. It depends on Zn(2+) as a cofactor.

The protein resides in the secreted. Functionally, extracellular aminopeptidase that allows assimilation of proteinaceous substrates. In Coccidioides posadasii (strain RMSCC 757 / Silveira) (Valley fever fungus), this protein is Leucine aminopeptidase 1 (LAP1).